The chain runs to 759 residues: Protein hunchback (759 aa).

Disordered regions lie at residues 30–51 (EPGH…PIPS) and 171–215 (SSEK…EDMK). Residues 39–51 (SVASSPRQSPIPS) are compositionally biased toward polar residues. The residue at position 179 (T179) is a Phosphothreonine. Residues S189, S208, S210, and S211 each carry the phosphoserine modification. Basic and acidic residues predominate over residues 199 to 215 (EPEKEHDQMSNSSEDMK). C2H2-type zinc fingers lie at residues 241 to 263 (YKCK…TRTH), 270 to 292 (LQCP…IRKH), 298 to 320 (FQCD…RKSH), and 326 to 350 (YRCA…KYGH). Disordered stretches follow at residues 366–419 (LVID…TSQL), 513–565 (QLQQ…PQQP), and 606–696 (MTSP…APAS). Low complexity-rich tracts occupy residues 399 to 419 (VAAV…TSQL) and 513 to 522 (QLQQQNQQQS). Residues 523–532 (DNEEEEQDDE) are compositionally biased toward acidic residues. A phosphoserine mark is found at S537 and S540. Residues 655-696 (ANTSASSTASSSGNSSNASSNGNSSSNSSSNGTSSAAAAPAS) are compositionally biased toward low complexity. 2 consecutive C2H2-type zinc fingers follow at residues 706-728 (YECK…MGYH) and 734-758 (FKCN…RNAH).

Belongs to the hunchback C2H2-type zinc-finger protein family.

The protein resides in the nucleus. In terms of biological role, gap class segmentation protein that controls development of head structures. This chain is Protein hunchback, found in Drosophila yakuba (Fruit fly).